The following is a 207-amino-acid chain: MTKVIKSKYKVSRRLGTSVWGHEKDAINNKNYKPGQQGNSSSISKPSDYSKHLIAKQRLKSHYGRISEKQFRNTFKIARKKSGNTAENLVGLLERRLDAVVYRLNIAPTIFAARQLVSHKHIKVNGKKINIASYRVKAGDSIELSEQAKQIPIVIGAISKKARRIPEYLAFDDEKFIGNFIRMPSSISEVPYPFDPQINLVVEFYSA.

The tract at residues 26 to 47 (AINNKNYKPGQQGNSSSISKPS) is disordered. The segment covering 28–39 (NNKNYKPGQQGN) has biased composition (polar residues). The S4 RNA-binding domain occupies 95–158 (RRLDAVVYRL…KQIPIVIGAI (64 aa)).

The protein belongs to the universal ribosomal protein uS4 family. Part of the 30S ribosomal subunit. Contacts protein S5. The interaction surface between S4 and S5 is involved in control of translational fidelity.

One of the primary rRNA binding proteins, it binds directly to 16S rRNA where it nucleates assembly of the body of the 30S subunit. Its function is as follows. With S5 and S12 plays an important role in translational accuracy. The polypeptide is Small ribosomal subunit protein uS4 (Orientia tsutsugamushi (strain Boryong) (Rickettsia tsutsugamushi)).